Consider the following 184-residue polypeptide: GTP cyclohydrolase 1 (184 aa).

Zn(2+)-binding residues include Cys-75, His-78, and Cys-146.

Belongs to the GTP cyclohydrolase I family. In terms of assembly, homomer.

It catalyses the reaction GTP + H2O = 7,8-dihydroneopterin 3'-triphosphate + formate + H(+). It participates in cofactor biosynthesis; 7,8-dihydroneopterin triphosphate biosynthesis; 7,8-dihydroneopterin triphosphate from GTP: step 1/1. This Coxiella burnetii (strain Dugway 5J108-111) protein is GTP cyclohydrolase 1.